A 389-amino-acid chain; its full sequence is MATLFMKLVSFFLILSTFCLTTVNSEPQCHNFKSIISFGDSIADTGNLLALSDPTNLPKVAFLPYGETFFHHPTGRFSNGRLIIDFIAEFLGFPLVPPFYGSQNANFEKGVNFAVGGATALERSFLEERGIHFPYTNVSLAVQLSSFKESLPNLCVSPSDCRDMIENSLILMGEIGGNDYNYAFFVGKNIEEIKELVPLVIETISSAITELIGMGGKTFLVPGEFPLGCSVAYLSLYQTSNIEEYDPLTGCLKWLNKFSEYHDEQLQAELNRLQKLYPHVNIIYADYYNTLLRLAQEPAKFGFISRPLPACCALGGPFNFTLGRKRGTQVPECCDDPSKYVSWDGVHMTEAAYRLMAEGILKGPYAIPPFDWSCLSSEIKNTQNSLMNN.

The N-terminal stretch at 1 to 25 (MATLFMKLVSFFLILSTFCLTTVNS) is a signal peptide. Catalysis depends on Ser41, which acts as the Nucleophile. Asn137 and Asn319 each carry an N-linked (GlcNAc...) asparagine glycan. Residues Asp344 and His347 contribute to the active site.

It belongs to the 'GDSL' lipolytic enzyme family.

It localises to the secreted. This Arabidopsis thaliana (Mouse-ear cress) protein is GDSL esterase/lipase At1g28570.